The sequence spans 444 residues: Spermatogenesis-associated protein 1 (444 aa).

Basic and acidic residues predominate over residues 145–160; the sequence is GTIHRPDSLSLSKDEP. Residues 145-229 are disordered; the sequence is GTIHRPDSLS…DEGEEDDKAT (85 aa). Positions 268–403 form a coiled coil; it reads SLLKIEREKI…RKLDTDKMKL (136 aa).

In terms of assembly, interacts with IFT20.

Its subcellular location is the cytoplasmic vesicle. The protein localises to the secretory vesicle. It is found in the acrosome. The sequence is that of Spermatogenesis-associated protein 1 (Spata1) from Rattus norvegicus (Rat).